We begin with the raw amino-acid sequence, 963 residues long: Longitudinals lacking protein, isoforms J/P/Q/S/Z (963 aa).

A BTB domain is found at 32–97 (VDCTLAAEGK…MYRGEVNISQ (66 aa)). Disordered stretches follow at residues 115–200 (LSDN…SSVL), 228–340 (SSGP…ASAS), 447–469 (DAQQRDPQDEAGQNEGGESRIRV), and 482–520 (GKSSDEPSDKLTQSKKSLISDAKTTNKTSTPIRPKVSTT). Low complexity-rich tracts occupy residues 162–175 (SGDVSGSREGSSSP), 228–251 (SSGPAAGTSSQASSTQQQQPLTST), 263–293 (TSSTAAPASGASASAAVQQAHLHQQQAQTTS), and 329–340 (NSATGPNPASAS). Polar residues predominate over residues 491–512 (KLTQSKKSLISDAKTTNKTSTP). The C2H2-type 1; degenerate zinc finger occupies 849–871 (WVCRNCNRTYKWKNSLKCHLKNE). Residues 878–901 (YFCSKMCGYATNVHSNLKRHLNTK) form a C2H2-type 2; degenerate zinc finger. The segment at 900–963 (TKCRDREKDA…YTLVFQNDSA (64 aa)) is disordered. A compositionally biased stretch (basic and acidic residues) spans 901–915 (KCRDREKDADDEKKP). Low complexity predominate over residues 937–953 (SSSNNNNNGGGSSTSST). Over residues 954–963 (YTLVFQNDSA) the composition is skewed to polar residues.

By stage 11, isoform Q, isoform P and isoform Z are expressed throughout the mesoderm. From stage 15, expression of isoform P expands to all tissues, whereas expression of isoform Z and isoform Q becomes restricted during later stages; starting from stage 14 to 16, isoform Z is expressed in muscle, and isoform Q and isoform Z are expressed in the CNS. For some isoforms, expression is also seen in specific types of cells in the embryo; isoform Z is expressed in the ventral furrow at stage 5, and isoform Q is expressed around the tracheal pits at stage 11. Isoform Z also shows transient enrichment in a dorsal cell layer in the CNS at stages 13 and 14.

It localises to the nucleus. Functionally, putative transcription factor required for axon growth and guidance in the central and peripheral nervous systems. Repels CNS axons away from the midline by promoting the expression of the midline repellent sli and its receptor robo. The protein is Longitudinals lacking protein, isoforms J/P/Q/S/Z of Drosophila melanogaster (Fruit fly).